The primary structure comprises 143 residues: Transcriptional regulator MraZ (143 aa).

2 SpoVT-AbrB domains span residues 5 to 47 (EYHH…PIEE) and 76 to 119 (AMES…SAER).

Belongs to the MraZ family. In terms of assembly, forms oligomers.

It localises to the cytoplasm. It is found in the nucleoid. This Lactobacillus gasseri (strain ATCC 33323 / DSM 20243 / BCRC 14619 / CIP 102991 / JCM 1131 / KCTC 3163 / NCIMB 11718 / NCTC 13722 / AM63) protein is Transcriptional regulator MraZ.